Here is a 1164-residue protein sequence, read N- to C-terminus: MFKSNYERKMRYSIRKFSVGVASVAVASLFMGSVAHASELVKDDSVKTTEVAAKPYPSMAQTDQGNNSSSSELETTKMEIPTTDIKKAVEPVEKTAGETSATDTGKREKQLQQWKNNLKNDVDNTILSHEQKNEFKTKIDETNDSDALLELENQFNETNRLLHIKQHEEVEKDKKAKQQKTLKQSDTKVDLSNIDKELNHQKSQVEKMAEQKGITNEDKDSMLKKIEDIRKQAQQADKKEDAEVKVREELGKLFSSTKAGLDQEIQEHVKKETSSEENTQKVDEHYANSLQNLAQKSLEELDKATTNEQATQVKNQFLENAQKLKEIQPLIKETNVKLYKAMSESLEQVEKELKHNSEANLEDLVAKSKEIVREYEGKLNQSKNLPELKQLEEEAHSKLKQVVEDFRKKFKTSEQVTPKKRVKRDLAANENNQQKIELTVSPENITVYEGEDVKFTVTAKSDSKTTLDFSDLLTKYNPSVSDRISTNYKTNTDNHKIAEITIKNLKLNESQTVTLKAKDDSGNVVEKTFTITVQKKEEKQVPKTPEQKDSKTEEKVPQEPKSNDKNQLQELIKSAQQELEKLEKAIKELMEQPEIPSNPEYGIQKSIWESQKEPIQEAITSFKKIIGDSSSKYYTEHYFNKYKSDFMNYQLHAQMEMLTRKVVQYMNKYPDNAEIKKIFESDMKRTKEDNYGSLENDALKGYFEKYFLTPFNKIKQIVDDLDKKVEQDQPAPIPENSEMDQAKEKAKIAVSKYMSKVLDGVHQHLQKKNNSKIVDLFKELEAIKQQTIFDIDNAKTEVEIDNLVHDAFSKMNATVAKFQKGLETNTPETPDTPKIPELPQAPDTPQAPDTPHVPESPKAPEAPRVPESPKTPEAPHVPESPKAPEAPRVPESPKTPEAPHVPESPKTPEAPKIPEPPKTPDVPKLPDVPKLPDVPKLPDAPKLPDGLNKVGQAVFTSTDGNTKVTVVFDKPTDADKLHLKEVTTKELADKIAHKTGGGTVRVFDLSLSKGGKETHVNGERTVRLALGQTGSDVHVYHVKENGDLERIPSKVENGQVVFKTNHFSLFAIKTLSKDQNVTPPKQTKPSTQGSQVEIAESQTGKFQSKAANHKALATGNETVAKGNPTSTTEKKLPYTGVASNLVLEIMGLLGLIGTSFIAMKRRKS.

A signal peptide spans 1–37 (MFKSNYERKMRYSIRKFSVGVASVAVASLFMGSVAHA). 2 disordered regions span residues 54–75 (KPYP…ELET) and 167–220 (HEEV…EDKD). Polar residues predominate over residues 59 to 73 (MAQTDQGNNSSSSEL). Composition is skewed to basic and acidic residues over residues 167-176 (HEEVEKDKKA) and 183-220 (KQSD…EDKD). 2 igA-binding regions span residues 199–438 (NHQK…KIEL) and 439–826 (TVSP…ETNT). Residues 434–534 (QKIELTVSPE…VEKTFTITVQ (101 aa)) form the Ig-like domain. Over residues 536-564 (KEEKQVPKTPEQKDSKTEEKVPQEPKSND) the composition is skewed to basic and acidic residues. Disordered stretches follow at residues 536 to 567 (KEEK…DKNQ) and 823 to 947 (ETNT…PDGL). Positions 911–920 (PKIPEPPKTP) are enriched in pro residues. An LPXTG sorting signal motif is present at residues 1132–1136 (LPYTG). Position 1135 is a pentaglycyl murein peptidoglycan amidated threonine (threonine 1135). A propeptide spans 1136 to 1164 (GVASNLVLEIMGLLGLIGTSFIAMKRRKS) (removed by sortase).

It is found in the secreted. The protein localises to the cell wall. The sequence is that of IgA FC receptor (bag) from Streptococcus agalactiae.